The primary structure comprises 375 residues: Succinyl-diaminopimelate desuccinylase (375 aa).

A Zn(2+)-binding site is contributed by His66. Asp68 is a catalytic residue. Asp99 contributes to the Zn(2+) binding site. Residue Glu133 is the Proton acceptor of the active site. Residues Glu134, Glu162, and His348 each coordinate Zn(2+).

Belongs to the peptidase M20A family. DapE subfamily. As to quaternary structure, homodimer. Zn(2+) serves as cofactor. Co(2+) is required as a cofactor.

It carries out the reaction N-succinyl-(2S,6S)-2,6-diaminopimelate + H2O = (2S,6S)-2,6-diaminopimelate + succinate. The protein operates within amino-acid biosynthesis; L-lysine biosynthesis via DAP pathway; LL-2,6-diaminopimelate from (S)-tetrahydrodipicolinate (succinylase route): step 3/3. In terms of biological role, catalyzes the hydrolysis of N-succinyl-L,L-diaminopimelic acid (SDAP), forming succinate and LL-2,6-diaminopimelate (DAP), an intermediate involved in the bacterial biosynthesis of lysine and meso-diaminopimelic acid, an essential component of bacterial cell walls. This Escherichia coli O17:K52:H18 (strain UMN026 / ExPEC) protein is Succinyl-diaminopimelate desuccinylase.